The chain runs to 633 residues: Pentatricopeptide repeat-containing protein At1g43980, mitochondrial (633 aa).

Residues 1-30 (MFQLLRRAHGLCMPSSLYFSRLVNRSLLSK) constitute a mitochondrion transit peptide. PPR repeat units follow at residues 50 to 80 (TTYWGNRCLQLYFKSGSVINALQLFDDIPDK), 81 to 111 (NTITWNVCLKGLFKNGYLNNALDLFDEMPER), 112 to 146 (DVVSWNTMISGLVSCGFHEYGIRVFFDMQRWEIRP), 147 to 178 (TEFTFSILASLVTCVRHGEQIHGNAICSGVSR), 180 to 210 (NLVVWNSVMDMYRRLGVFDYALSVFLTMEDR), 211 to 245 (DVVSWNCLILSCSDSGNKEVALDQFWLMREMEIQP), 246 to 280 (DEYTVSMVVSICSDLRELSKGKQALALCIKMGFLS), 281 to 311 (NSIVLGAGIDMFSKCNRLDDSVKLFRELEKW), 312 to 346 (DSVLCNSMIGSYSWHCCGEDALRLFILAMTQSVRP), 347 to 380 (DKFTFSSVLSSMNAVMLDHGADVHSLVIKLGFDL), 381 to 411 (DTAVATSLMEMYFKTGSVDLAMGVFAKTDGK), 412 to 447 (DLIFWNTVIMGLARNSRAVESLAIFNQLLMNQSLKP), 448 to 483 (DRVTLMGILVACCYAGFVNEGIQIFSSMEKAHGVNP), and 484 to 514 (GNEHYACIIELLCRVGMINEAKDIADKIPFE). The tract at residues 519 to 594 (IWEPILCASL…AQGSSKISIE (76 aa)) is type E motif.

It belongs to the PPR family. PCMP-E subfamily.

It localises to the mitochondrion. In Arabidopsis thaliana (Mouse-ear cress), this protein is Pentatricopeptide repeat-containing protein At1g43980, mitochondrial (PCMP-E58).